Reading from the N-terminus, the 146-residue chain is Large ribosomal subunit protein uL15 (146 aa).

Residues 1–10 show a composition bias toward basic and acidic residues; it reads MTIKLHDLKP. Residues 1-52 are disordered; it reads MTIKLHDLKPARGSKTPRTRVGRGEGSKGKTAGRGTKGTKARKNVPVTFEGG.

The protein belongs to the universal ribosomal protein uL15 family. In terms of assembly, part of the 50S ribosomal subunit.

Binds to the 23S rRNA. The protein is Large ribosomal subunit protein uL15 of Mycolicibacterium paratuberculosis (strain ATCC BAA-968 / K-10) (Mycobacterium paratuberculosis).